The chain runs to 381 residues: 8-amino-7-oxononanoate synthase (381 aa).

A substrate-binding site is contributed by arginine 27. 105–106 serves as a coordination point for pyridoxal 5'-phosphate; it reads GY. Substrate is bound at residue histidine 130. Pyridoxal 5'-phosphate contacts are provided by residues serine 176, 201 to 204, and 232 to 235; these read DEAH and TLSK. Lysine 235 is subject to N6-(pyridoxal phosphate)lysine. Threonine 345 contacts substrate.

Belongs to the class-II pyridoxal-phosphate-dependent aminotransferase family. BioF subfamily. As to quaternary structure, homodimer. Pyridoxal 5'-phosphate is required as a cofactor.

The catalysed reaction is 6-carboxyhexanoyl-[ACP] + L-alanine + H(+) = (8S)-8-amino-7-oxononanoate + holo-[ACP] + CO2. It functions in the pathway cofactor biosynthesis; biotin biosynthesis. In terms of biological role, catalyzes the decarboxylative condensation of pimeloyl-[acyl-carrier protein] and L-alanine to produce 8-amino-7-oxononanoate (AON), [acyl-carrier protein], and carbon dioxide. This chain is 8-amino-7-oxononanoate synthase, found in Mycobacterium avium (strain 104).